A 154-amino-acid chain; its full sequence is UPF0756 membrane protein EAT1b_0668 (154 aa).

Helical transmembrane passes span 5-25, 52-72, 82-102, 107-127, and 129-149; these read LFLL…VIIA, WGVT…DIGF, PVGI…GQGV, VDPV…GFMK, and IPVG…GYQV.

Belongs to the UPF0756 family.

Its subcellular location is the cell membrane. This chain is UPF0756 membrane protein EAT1b_0668, found in Exiguobacterium sp. (strain ATCC BAA-1283 / AT1b).